The following is a 242-amino-acid chain: Biosynthetic peptidoglycan transglycosylase (242 aa).

Residues 19–39 (LLLACAVLWGGGVALFSIVPV) form a helical membrane-spanning segment.

It belongs to the glycosyltransferase 51 family.

It localises to the cell inner membrane. It carries out the reaction [GlcNAc-(1-&gt;4)-Mur2Ac(oyl-L-Ala-gamma-D-Glu-L-Lys-D-Ala-D-Ala)](n)-di-trans,octa-cis-undecaprenyl diphosphate + beta-D-GlcNAc-(1-&gt;4)-Mur2Ac(oyl-L-Ala-gamma-D-Glu-L-Lys-D-Ala-D-Ala)-di-trans,octa-cis-undecaprenyl diphosphate = [GlcNAc-(1-&gt;4)-Mur2Ac(oyl-L-Ala-gamma-D-Glu-L-Lys-D-Ala-D-Ala)](n+1)-di-trans,octa-cis-undecaprenyl diphosphate + di-trans,octa-cis-undecaprenyl diphosphate + H(+). The protein operates within cell wall biogenesis; peptidoglycan biosynthesis. In terms of biological role, peptidoglycan polymerase that catalyzes glycan chain elongation from lipid-linked precursors. The polypeptide is Biosynthetic peptidoglycan transglycosylase (Klebsiella oxytoca).